The chain runs to 971 residues: Isoleucine--tRNA ligase (971 aa).

Residues 60 to 70 (PYANGDLHIGH) carry the 'HIGH' region motif. E563 is a binding site for L-isoleucyl-5'-AMP. The 'KMSKS' region signature appears at 604 to 608 (KMSKS). K607 is a binding site for ATP. 4 residues coordinate Zn(2+): C922, C925, C942, and C945.

Belongs to the class-I aminoacyl-tRNA synthetase family. IleS type 1 subfamily. Monomer. It depends on Zn(2+) as a cofactor.

Its subcellular location is the cytoplasm. It carries out the reaction tRNA(Ile) + L-isoleucine + ATP = L-isoleucyl-tRNA(Ile) + AMP + diphosphate. Functionally, catalyzes the attachment of isoleucine to tRNA(Ile). As IleRS can inadvertently accommodate and process structurally similar amino acids such as valine, to avoid such errors it has two additional distinct tRNA(Ile)-dependent editing activities. One activity is designated as 'pretransfer' editing and involves the hydrolysis of activated Val-AMP. The other activity is designated 'posttransfer' editing and involves deacylation of mischarged Val-tRNA(Ile). This is Isoleucine--tRNA ligase from Acaryochloris marina (strain MBIC 11017).